The primary structure comprises 62 residues: Large ribosomal subunit protein bL33 (62 aa).

This sequence belongs to the bacterial ribosomal protein bL33 family.

This is Large ribosomal subunit protein bL33 from Porphyromonas gingivalis (strain ATCC 33277 / DSM 20709 / CIP 103683 / JCM 12257 / NCTC 11834 / 2561).